The following is a 352-amino-acid chain: Keratocan (352 aa).

Positions 1–20 (MAGTICFIMWVLFITDTVWS) are cleaved as a signal peptide. Residues 33–71 (DDWTIHDFECPMECFCPPSFPTALYCENRGLKEIPAIPS) enclose the LRRNT domain. 2 disulfides stabilise this stretch: Cys-42–Cys-48 and Cys-46–Cys-58. LRR repeat units follow at residues 72-93 (RIWY…PFEN), 96-117 (QLRW…KGAL), 122-142 (KLLF…PLPR), 143-164 (SLEQ…TFSN), 167-180 (NLTL…KLVD), 193-213 (NLMQ…RLPA), 214-235 (NTMQ…YFNV), 238-258 (KVAF…PSRG), 263-282 (SILD…RISA), and 283-304 (HLQH…VICP). A glycan (N-linked (GlcNAc...) (keratan sulfate) asparagine) is linked at Asn-93. Asn-167 carries an N-linked (GlcNAc...) (keratan sulfate) asparagine glycan. Asn-222 is a glycosylation site (N-linked (GlcNAc...) asparagine). Asn-298 carries N-linked (GlcNAc...) asparagine glycosylation. An intrachain disulfide couples Cys-303 to Cys-343.

This sequence belongs to the small leucine-rich proteoglycan (SLRP) family. SLRP class II subfamily. Post-translationally, binds keratan sulfate chains. In terms of tissue distribution, cornea (at protein level). Increased expression in the stroma of keratoconus corneas. Also detected in trachea, and in low levels, in intestine, skeletal muscle, ovary, lung and putamen.

Its subcellular location is the secreted. It localises to the extracellular space. The protein resides in the extracellular matrix. Its function is as follows. May be important in developing and maintaining corneal transparency and for the structure of the stromal matrix. The chain is Keratocan (KERA) from Homo sapiens (Human).